The sequence spans 175 residues: Pituitary adenylate cyclase-activating polypeptide (175 aa).

The N-terminal stretch at 1-24 is a signal peptide; sequence MTMCSGARLALLVYGIIMHNSVSC. The propeptide occupies 25 to 78; the sequence is SPAAGLSFPGIRPEEEAYDQDGNPLQDFYDWDPPGAGSPASALRDAYALYYPAD. Residues 149-157 are important for receptor binding; sequence VKKYLAAVL. Leu-157 is modified (leucine amide). Lys-168 bears the Lysine amide mark. Residues 172-175 constitute a propeptide that is removed on maturation; that stretch reads IAYL.

The protein belongs to the glucagon family.

It is found in the secreted. In terms of biological role, PACAP is a neuropeptide involved in diverse array of physiological processes through activating the PACAP subfamily of class B1 G protein-coupled receptors: VIP receptor 1 (VIPR1), VIP receptor 2 (VIPR2), and PACAP type I receptor (ADCYAP1R1). Exerts neuroprotective and general cytoprotective effects due to anti-apoptotic, anti-inflammatory, and antioxidant actions. Promotes neuron projection development through the RAPGEF2/Rap1/B-Raf/ERK pathway. In chromaffin cells, induces long-lasting increase of intracellular calcium concentrations and neuroendocrine secretion. Involved in the control of glucose homeostasis, induces insulin secretion by pancreatic beta cells. PACAP exists in two bioactive forms from proteolysis of the same precursor protein, PACAP27 and PACAP38, which differ by eleven amino acid residues in the C-terminus. The protein is Pituitary adenylate cyclase-activating polypeptide (Adcyap1) of Rattus norvegicus (Rat).